A 1062-amino-acid chain; its full sequence is Platelet-derived growth factor receptor alpha (1062 aa).

The signal sequence occupies residues 1–27; sequence MFPPSSAPLLLPQLEELVVPLHTAFTL. 5 consecutive Ig-like C2-type domains span residues 28-96, 91-184, 190-281, 287-381, and 389-493; these read TCQG…VYVP, IYVY…VHGW, LHVE…KQIA, SEFM…RTVS, and PAVI…IKLV. The Extracellular portion of the chain corresponds to 28-504; that stretch reads TCQGEATIAW…NGPHPELTVA (477 aa). Cysteines 29 and 74 form a disulfide. N-linked (GlcNAc...) asparagine glycans are attached at residues N79 and N132. Disulfide bonds link C124–C165 and C211–C265. N-linked (GlcNAc...) asparagine glycosylation is found at N273, N333, N366, N433, and N444. The cysteines at positions 410 and 477 are disulfide-linked. Residues 505–525 traverse the membrane as a helical segment; it reads AAVLVLLVIVIISLIVLVVIW. Residues 526–1062 are Cytoplasmic-facing; it reads KQKPRYEIRW…CSDLVEDSFL (537 aa). 2 positions are modified to phosphotyrosine; by autocatalysis: Y548 and Y550. The 377-residue stretch at 569–945 folds into the Protein kinase domain; the sequence is LVLGRILGSG…HYERVNHEFL (377 aa). Residues 575-583 and K603 contribute to the ATP site; that span reads LGSGAFGKV. Residues Y697, Y708, Y719, Y731, and Y739 each carry the phosphotyrosine; by autocatalysis modification. Positions 734–754 are disordered; it reads LQGSNYDHPPSQKGSNDGEMD. D793 functions as the Proton acceptor in the catalytic mechanism. Y824 and Y963 each carry phosphotyrosine; by autocatalysis. Over residues 975–986 the composition is skewed to basic and acidic residues; it reads KDRESGFDEQRL. Residues 975 to 1034 are disordered; sequence KDRESGFDEQRLSSDSGYIIPLPDLDPISDEEYGKRNRHSSQTSEESAIETGSSSSTFAK. Y992 is subject to Phosphotyrosine; by autocatalysis. A compositionally biased stretch (polar residues) spans 1014-1032; it reads SSQTSEESAIETGSSSSTF.

It belongs to the protein kinase superfamily. Tyr protein kinase family. CSF-1/PDGF receptor subfamily. In terms of assembly, interacts with homodimeric pdgfa, pdgfb and pdgfc, and with heterodimers formed by pdgfa and pdgfb. monomer in the absence of bound ligand. Interaction with dimeric pdgfa, pdgfb and/or pdgfc leads to receptor dimerization, where both pdgfra homodimers and heterodimers with pdgfrb are observed. Ubiquitinated, leading to its degradation. In terms of processing, autophosphorylated on tyrosine residues upon ligand binding. Autophosphorylation occurs in trans, i.e. one subunit of the dimeric receptor phosphorylates tyrosine residues on the other subunit.

The protein localises to the cell membrane. The enzyme catalyses L-tyrosyl-[protein] + ATP = O-phospho-L-tyrosyl-[protein] + ADP + H(+). With respect to regulation, present in an inactive conformation in the absence of bound ligand. Binding of pdgfa and/or pdgfb leads to dimerization and activation by autophosphorylation on tyrosine residues. Tyrosine-protein kinase that acts as a cell-surface receptor for pdgfa, pdgfb and pdgfc and plays an essential role in the regulation of embryonic development, cell proliferation, survival and chemotaxis. Depending on the context, promotes or inhibits cell proliferation and cell migration. Plays an important role in the differentiation of bone marrow-derived mesenchymal stem cells. Required for normal skeleton development. Required for normal development of the gastrointestinal tract. Plays a role in cell migration and chemotaxis in wound healing. Plays a role in platelet activation, secretion of agonists from platelet granules, and in thrombin-induced platelet aggregation. Binding of its cognate ligands - homodimeric pdgfa, homodimeric pdgfb, heterodimers formed by pdgfa and pdgfb or homodimeric pdgfc -leads to the activation of several signaling cascades; the response depends on the nature of the bound ligand and is modulated by the formation of heterodimers between pdgfra and pdgfrb. Phosphorylates pik3r1, plcg1, and ptpn11. Activation of plcg1 leads to the production of the cellular signaling molecules diacylglycerol and inositol 1,4,5-trisphosphate, mobilization of cytosolic Ca(2+) and the activation of protein kinase C. Phosphorylates pik3r1, the regulatory subunit of phosphatidylinositol 3-kinase, and thereby mediates activation of the AKT1 signaling pathway. Mediates activation of hras and of the MAP kinases mapk1/erk2 and/or mapk3/erk1. Promotes activation of STAT family members stat1, stat3 and stat5a and/or stat5b. Receptor signaling is down-regulated by protein phosphatases that dephosphorylate the receptor and its down-stream effectors, and by rapid internalization of the activated receptor. The polypeptide is Platelet-derived growth factor receptor alpha (pdgfra) (Takifugu rubripes (Japanese pufferfish)).